A 100-amino-acid chain; its full sequence is UPF0213 protein YhbQ (100 aa).

In terms of domain architecture, GIY-YIG spans 2–77 (TPWFLYLIRT…KQLTKRQKER (76 aa)).

It belongs to the UPF0213 family.

This is UPF0213 protein YhbQ from Escherichia fergusonii (strain ATCC 35469 / DSM 13698 / CCUG 18766 / IAM 14443 / JCM 21226 / LMG 7866 / NBRC 102419 / NCTC 12128 / CDC 0568-73).